We begin with the raw amino-acid sequence, 314 residues long: tRNA dimethylallyltransferase (314 aa).

Gly12 to Thr19 contacts ATP. Position 14–19 (Thr14–Thr19) interacts with substrate. Interaction with substrate tRNA regions lie at residues Asp37 to Leu40, Gln161 to Arg165, Arg242 to Arg247, and Lys275 to Arg282.

This sequence belongs to the IPP transferase family. Monomer. Mg(2+) is required as a cofactor.

It catalyses the reaction adenosine(37) in tRNA + dimethylallyl diphosphate = N(6)-dimethylallyladenosine(37) in tRNA + diphosphate. Functionally, catalyzes the transfer of a dimethylallyl group onto the adenine at position 37 in tRNAs that read codons beginning with uridine, leading to the formation of N6-(dimethylallyl)adenosine (i(6)A). The polypeptide is tRNA dimethylallyltransferase (Mannheimia succiniciproducens (strain KCTC 0769BP / MBEL55E)).